We begin with the raw amino-acid sequence, 88 residues long: Transmembrane protein 069R (88 aa).

2 helical membrane passes run 30–50 and 67–87; these read ALWP…VFTA and VGVF…GDSF.

It is found in the host membrane. This Frog virus 3 (isolate Goorha) (FV-3) protein is Transmembrane protein 069R.